Consider the following 282-residue polypeptide: Acetyl-coenzyme A carboxylase carboxyl transferase subunit beta (282 aa).

One can recognise a CoA carboxyltransferase N-terminal domain in the interval 29–282; sequence LMQRCPNCGL…LLKYGGMQDD (254 aa). 4 residues coordinate Zn(2+): cysteine 33, cysteine 36, cysteine 51, and cysteine 54. The C4-type zinc-finger motif lies at 33 to 54; the sequence is CPNCGLEFFARRLDKYKTCPDC.

The protein belongs to the AccD/PCCB family. In terms of assembly, acetyl-CoA carboxylase is a heterohexamer composed of biotin carboxyl carrier protein (AccB), biotin carboxylase (AccC) and two subunits each of ACCase subunit alpha (AccA) and ACCase subunit beta (AccD). The cofactor is Zn(2+).

Its subcellular location is the cytoplasm. The catalysed reaction is N(6)-carboxybiotinyl-L-lysyl-[protein] + acetyl-CoA = N(6)-biotinyl-L-lysyl-[protein] + malonyl-CoA. Its pathway is lipid metabolism; malonyl-CoA biosynthesis; malonyl-CoA from acetyl-CoA: step 1/1. In terms of biological role, component of the acetyl coenzyme A carboxylase (ACC) complex. Biotin carboxylase (BC) catalyzes the carboxylation of biotin on its carrier protein (BCCP) and then the CO(2) group is transferred by the transcarboxylase to acetyl-CoA to form malonyl-CoA. In Lactobacillus delbrueckii subsp. bulgaricus (strain ATCC BAA-365 / Lb-18), this protein is Acetyl-coenzyme A carboxylase carboxyl transferase subunit beta.